Consider the following 318-residue polypeptide: Ubiquitin-conjugating enzyme E2 J1 (318 aa).

At methionine 1–threonine 282 the chain is on the cytoplasmic side. The UBC core domain maps to proline 10–glycine 168. Cysteine 91 serves as the catalytic Glycyl thioester intermediate. The residue at position 184 (serine 184) is a Phosphoserine. Polar residues predominate over residues proline 215 to serine 233. The disordered stretch occupies residues proline 215–glutamate 283. Over residues serine 249–proline 269 the composition is skewed to low complexity. Residues serine 266 and serine 268 each carry the phosphoserine modification. Residues glutamate 283–phenylalanine 303 form a helical; Anchor for type IV membrane protein membrane-spanning segment. Over arginine 304 to leucine 318 the chain is Lumenal.

Belongs to the ubiquitin-conjugating enzyme family. Component of the HRD1 complex, which comprises at least SYNV1/HRD1, DERL1/2, FAM8A1, HERPUD1/HERP, OS9, SEL1L and UBE2J1. Interacts with E3 ligase RNF26. Interacts with E3 ligase RNF133. In terms of processing, phosphorylated at Ser-184 in a cytosolic stress-dependent manner by MAP kinase p38 MAPKAPK2. Phosphorylated UBE2J1 is rapidly ubiquitinated and subsequently degraded by the proteasome.

The protein localises to the endoplasmic reticulum membrane. It carries out the reaction S-ubiquitinyl-[E1 ubiquitin-activating enzyme]-L-cysteine + [E2 ubiquitin-conjugating enzyme]-L-cysteine = [E1 ubiquitin-activating enzyme]-L-cysteine + S-ubiquitinyl-[E2 ubiquitin-conjugating enzyme]-L-cysteine.. It participates in protein modification; protein ubiquitination. In terms of biological role, catalyzes the covalent attachment of ubiquitin to other proteins. Functions in the selective degradation of misfolded membrane proteins from the endoplasmic reticulum (ERAD) and is essential for cells to recover from ER stress. Plays a role in MAPKAPK2-dependent translational control of TNF-alpha synthesis. Also acts as a platform for perinuclear positioning of the endosomal system by mediating ubiquitination of SQSTM1 through interaction with the E3 ubiquitin-protein ligase RNF26. Plays a role in male fecundity through the interaction with the E3 ubiquitin-protein ligase RNF133. The polypeptide is Ubiquitin-conjugating enzyme E2 J1 (Ube2j1) (Mus musculus (Mouse)).